The chain runs to 409 residues: Failed axon connections homolog (409 aa).

Residues 68–88 (YLTGGALLAAAAYLLHELLVI) form a helical membrane-spanning segment. Positions 372–409 (DEGAENSFSRTPDTDFTGHSLFDSDVDMDDYTDHEQCK) are disordered.

The protein belongs to the FAX family.

The protein localises to the membrane. May play a role in axonal development. The polypeptide is Failed axon connections homolog (FAXC) (Homo sapiens (Human)).